A 418-amino-acid chain; its full sequence is Serpin H1 (418 aa).

Residues 1 to 18 form the signal peptide; that stretch reads MRALLLISTICLLARALA. Lys-94 carries the post-translational modification N6-succinyllysine. N-linked (GlcNAc...) asparagine glycans are attached at residues Asn-120 and Asn-125. Ser-141 bears the Phosphoserine mark. At Lys-207 the chain carries N6-acetyllysine. Lys-296 carries the post-translational modification N6-succinyllysine. Lys-319 carries the post-translational modification N6-acetyllysine. The Prevents secretion from ER signature appears at 415-418; that stretch reads RDEL.

Belongs to the serpin family.

It is found in the endoplasmic reticulum lumen. In terms of biological role, binds specifically to collagen. Could be involved as a chaperone in the biosynthetic pathway of collagen. The sequence is that of Serpin H1 (SERPINH1) from Bos taurus (Bovine).